The following is a 329-amino-acid chain: Beta-ketoacyl-[acyl-carrier-protein] synthase III (329 aa).

Active-site residues include Cys123 and His256. The interval Gln257–Arg261 is ACP-binding. The active site involves Asn286.

Belongs to the thiolase-like superfamily. FabH family. As to quaternary structure, homodimer.

It is found in the cytoplasm. The enzyme catalyses malonyl-[ACP] + acetyl-CoA + H(+) = 3-oxobutanoyl-[ACP] + CO2 + CoA. Its pathway is lipid metabolism; fatty acid biosynthesis. Functionally, catalyzes the condensation reaction of fatty acid synthesis by the addition to an acyl acceptor of two carbons from malonyl-ACP. Catalyzes the first condensation reaction which initiates fatty acid synthesis and may therefore play a role in governing the total rate of fatty acid production. Possesses both acetoacetyl-ACP synthase and acetyl transacylase activities. Its substrate specificity determines the biosynthesis of branched-chain and/or straight-chain of fatty acids. The sequence is that of Beta-ketoacyl-[acyl-carrier-protein] synthase III from Burkholderia vietnamiensis (strain G4 / LMG 22486) (Burkholderia cepacia (strain R1808)).